The primary structure comprises 204 residues: Imidazoleglycerol-phosphate dehydratase (204 aa).

This sequence belongs to the imidazoleglycerol-phosphate dehydratase family.

Its subcellular location is the cytoplasm. The enzyme catalyses D-erythro-1-(imidazol-4-yl)glycerol 3-phosphate = 3-(imidazol-4-yl)-2-oxopropyl phosphate + H2O. It participates in amino-acid biosynthesis; L-histidine biosynthesis; L-histidine from 5-phospho-alpha-D-ribose 1-diphosphate: step 6/9. In Corynebacterium jeikeium (strain K411), this protein is Imidazoleglycerol-phosphate dehydratase.